Consider the following 305-residue polypeptide: UDP-3-O-acyl-N-acetylglucosamine deacetylase (305 aa).

Zn(2+)-binding residues include His79, His238, and Asp242. Catalysis depends on His265, which acts as the Proton donor.

It belongs to the LpxC family. Requires Zn(2+) as cofactor.

It carries out the reaction a UDP-3-O-[(3R)-3-hydroxyacyl]-N-acetyl-alpha-D-glucosamine + H2O = a UDP-3-O-[(3R)-3-hydroxyacyl]-alpha-D-glucosamine + acetate. The protein operates within glycolipid biosynthesis; lipid IV(A) biosynthesis; lipid IV(A) from (3R)-3-hydroxytetradecanoyl-[acyl-carrier-protein] and UDP-N-acetyl-alpha-D-glucosamine: step 2/6. Its function is as follows. Catalyzes the hydrolysis of UDP-3-O-myristoyl-N-acetylglucosamine to form UDP-3-O-myristoylglucosamine and acetate, the committed step in lipid A biosynthesis. This is UDP-3-O-acyl-N-acetylglucosamine deacetylase from Colwellia psychrerythraea (strain 34H / ATCC BAA-681) (Vibrio psychroerythus).